A 142-amino-acid chain; its full sequence is Large ribosomal subunit protein uL11 (142 aa).

The protein belongs to the universal ribosomal protein uL11 family. Part of the ribosomal stalk of the 50S ribosomal subunit. Interacts with L10 and the large rRNA to form the base of the stalk. L10 forms an elongated spine to which L12 dimers bind in a sequential fashion forming a multimeric L10(L12)X complex. Post-translationally, one or more lysine residues are methylated.

Its function is as follows. Forms part of the ribosomal stalk which helps the ribosome interact with GTP-bound translation factors. In Shewanella loihica (strain ATCC BAA-1088 / PV-4), this protein is Large ribosomal subunit protein uL11.